The primary structure comprises 367 residues: Quinolinate synthase (367 aa).

Positions 45 and 62 each coordinate iminosuccinate. Residue Cys-109 coordinates [4Fe-4S] cluster. Iminosuccinate contacts are provided by residues 140–142 (YVN) and Ser-161. Cys-229 lines the [4Fe-4S] cluster pocket. Iminosuccinate contacts are provided by residues 255-257 (HPE) and Thr-272. A [4Fe-4S] cluster-binding site is contributed by Cys-319.

This sequence belongs to the quinolinate synthase family. Type 3 subfamily. It depends on [4Fe-4S] cluster as a cofactor.

It localises to the cytoplasm. It carries out the reaction iminosuccinate + dihydroxyacetone phosphate = quinolinate + phosphate + 2 H2O + H(+). It participates in cofactor biosynthesis; NAD(+) biosynthesis; quinolinate from iminoaspartate: step 1/1. Catalyzes the condensation of iminoaspartate with dihydroxyacetone phosphate to form quinolinate. The protein is Quinolinate synthase of Anoxybacillus flavithermus (strain DSM 21510 / WK1).